Here is a 449-residue protein sequence, read N- to C-terminus: Agmatine hydroxycinnamoyltransferase 1 (449 aa).

Active-site proton acceptor residues include His-153 and Asp-392.

Belongs to the plant acyltransferase family. In terms of tissue distribution, highly expressed in roots. Expressed at low levels in flowers.

Functionally, hydroxycinnamoyl transferase that catalyzes the transfer of an acyl from p-coumaryol-CoA to agmatine, to produce coumaroyl agmatine. Can use feruloyl-CoA, caffeoyl-CoA and sinapoyl-CoA as acyl donors. Seems to be able to transfer the acyl group from p-coumaroyl-CoA and feruloyl-CoA to the acyl acceptors putrescine and spermidine. This is Agmatine hydroxycinnamoyltransferase 1 from Oryza sativa subsp. japonica (Rice).